A 369-amino-acid chain; its full sequence is UDP-N-acetylglucosamine--N-acetylmuramyl-(pentapeptide) pyrophosphoryl-undecaprenol N-acetylglucosamine transferase (369 aa).

Residues 15–17 (TGG), Asn-126, Arg-169, Ser-197, and Gln-299 contribute to the UDP-N-acetyl-alpha-D-glucosamine site.

It belongs to the glycosyltransferase 28 family. MurG subfamily.

Its subcellular location is the cell inner membrane. It carries out the reaction di-trans,octa-cis-undecaprenyl diphospho-N-acetyl-alpha-D-muramoyl-L-alanyl-D-glutamyl-meso-2,6-diaminopimeloyl-D-alanyl-D-alanine + UDP-N-acetyl-alpha-D-glucosamine = di-trans,octa-cis-undecaprenyl diphospho-[N-acetyl-alpha-D-glucosaminyl-(1-&gt;4)]-N-acetyl-alpha-D-muramoyl-L-alanyl-D-glutamyl-meso-2,6-diaminopimeloyl-D-alanyl-D-alanine + UDP + H(+). It participates in cell wall biogenesis; peptidoglycan biosynthesis. Functionally, cell wall formation. Catalyzes the transfer of a GlcNAc subunit on undecaprenyl-pyrophosphoryl-MurNAc-pentapeptide (lipid intermediate I) to form undecaprenyl-pyrophosphoryl-MurNAc-(pentapeptide)GlcNAc (lipid intermediate II). This is UDP-N-acetylglucosamine--N-acetylmuramyl-(pentapeptide) pyrophosphoryl-undecaprenol N-acetylglucosamine transferase from Methylorubrum extorquens (strain CM4 / NCIMB 13688) (Methylobacterium extorquens).